Consider the following 559-residue polypeptide: Prolyl 4-hydroxylase subunit alpha-1 (559 aa).

An N-terminal signal peptide occupies residues 1-16 (MRLALLVLATIGYAVA). Asn158 carries N-linked (GlcNAc...) asparagine glycosylation. The Fe2OG dioxygenase domain occupies 404 to 512 (TAEELQIANY…KWVSNKWIHE (109 aa)). Positions 422, 424, and 493 each coordinate Fe cation. Lys503 is a 2-oxoglutarate binding site.

This sequence belongs to the P4HA family. Heterotetramer of two alpha chains and two beta chains. Exists either as a phy-1(2)/pdi-2(2) tetramer or as a phy-1/phy-2/pdi-2(2) tetramer. Fe(2+) serves as cofactor. Requires L-ascorbate as cofactor.

The protein localises to the endoplasmic reticulum lumen. It catalyses the reaction L-prolyl-[collagen] + 2-oxoglutarate + O2 = trans-4-hydroxy-L-prolyl-[collagen] + succinate + CO2. In terms of biological role, catalyzes the post-translational formation of 4-hydroxyproline in -Xaa-Pro-Gly- sequences in collagens and other proteins. The chain is Prolyl 4-hydroxylase subunit alpha-1 (dpy-18) from Caenorhabditis elegans.